We begin with the raw amino-acid sequence, 275 residues long: Formamidopyrimidine-DNA glycosylase (275 aa).

The active-site Schiff-base intermediate with DNA is P2. The active-site Proton donor is the E3. The Proton donor; for beta-elimination activity role is filled by K58. The DNA site is built by H91, R109, and K154. An FPG-type zinc finger spans residues A240–K274. The Proton donor; for delta-elimination activity role is filled by R264.

The protein belongs to the FPG family. In terms of assembly, monomer. Zn(2+) is required as a cofactor.

The enzyme catalyses Hydrolysis of DNA containing ring-opened 7-methylguanine residues, releasing 2,6-diamino-4-hydroxy-5-(N-methyl)formamidopyrimidine.. The catalysed reaction is 2'-deoxyribonucleotide-(2'-deoxyribose 5'-phosphate)-2'-deoxyribonucleotide-DNA = a 3'-end 2'-deoxyribonucleotide-(2,3-dehydro-2,3-deoxyribose 5'-phosphate)-DNA + a 5'-end 5'-phospho-2'-deoxyribonucleoside-DNA + H(+). Functionally, involved in base excision repair of DNA damaged by oxidation or by mutagenic agents. Acts as a DNA glycosylase that recognizes and removes damaged bases. Has a preference for oxidized purines, such as 7,8-dihydro-8-oxoguanine (8-oxoG). Has AP (apurinic/apyrimidinic) lyase activity and introduces nicks in the DNA strand. Cleaves the DNA backbone by beta-delta elimination to generate a single-strand break at the site of the removed base with both 3'- and 5'-phosphates. The sequence is that of Formamidopyrimidine-DNA glycosylase from Bordetella avium (strain 197N).